Here is a 503-residue protein sequence, read N- to C-terminus: Sarpagan bridge enzyme 1 (503 aa).

Residues Ile-3–Thr-23 traverse the membrane as a helical; Signal-anchor for type II membrane protein segment. A heme-binding site is contributed by Cys-442.

Belongs to the cytochrome P450 family. Heme serves as cofactor. As to expression, highly expressed in roots. Expressed at low levels in leaves, stems and flowers.

It is found in the endoplasmic reticulum membrane. The enzyme catalyses (19E)-geissoschizine + reduced [NADPH--hemoprotein reductase] + O2 = polyneuridine aldehyde + oxidized [NADPH--hemoprotein reductase] + 2 H2O + H(+). It catalyses the reaction tetrahydroalstonine + A + reduced [NADPH--hemoprotein reductase] + O2 = alstonine + AH2 + oxidized [NADPH--hemoprotein reductase] + 2 H2O + H(+). It carries out the reaction ajmalicine + A + reduced [NADPH--hemoprotein reductase] + O2 = serpentine + AH2 + oxidized [NADPH--hemoprotein reductase] + 2 H2O + H(+). Its pathway is alkaloid biosynthesis; ajmaline biosynthesis. Functionally, monooxygenase involved in the biosynthesis of ajmaline-type monoterpenoid indole alkaloids (MIAs) natural products, important plant-derived pharmaceuticals used in the therapy of heart disorders. Converts by cyclization the strictosidine-derived geissoschizine to the sarpagan alkaloid polyneuridine aldehyde, precursor of vomilenine, an intermediate chemical in the biosynthesis of ajmaline. Converts by aromatization the tetrahydro-beta-carboline alkaloids tetrahydroalstonine and ajmalicine to the corresponding beta-carboline alkaloids alstonine and serpentine, respectively. This Rauvolfia serpentina (Serpentine wood) protein is Sarpagan bridge enzyme 1.